The chain runs to 291 residues: Protease HtpX (291 aa).

The next 2 membrane-spanning stretches (helical) occupy residues 4–24 and 37–57; these read IVIF…LLTC and IISG…SKFI. Position 139 (His139) interacts with Zn(2+). Glu140 is an active-site residue. His143 provides a ligand contact to Zn(2+). The next 2 helical transmembrane spans lie at 147–167 and 195–215; these read GDMV…IFIS and IVST…VLWF. Residue Glu220 coordinates Zn(2+).

It belongs to the peptidase M48B family. It depends on Zn(2+) as a cofactor.

It localises to the cell membrane. The protein is Protease HtpX of Baumannia cicadellinicola subsp. Homalodisca coagulata.